The following is a 361-amino-acid chain: Tyrosine--tRNA ligase (361 aa).

Residues Y36, Y162, Q166, D169, and Q184 each coordinate L-tyrosine. Positions 236–240 (KMSKS) match the 'KMSKS' region motif. K239 is an ATP binding site.

The protein belongs to the class-I aminoacyl-tRNA synthetase family. TyrS type 4 subfamily. Homodimer.

It is found in the cytoplasm. The enzyme catalyses tRNA(Tyr) + L-tyrosine + ATP = L-tyrosyl-tRNA(Tyr) + AMP + diphosphate + H(+). Catalyzes the attachment of tyrosine to tRNA(Tyr) in a two-step reaction: tyrosine is first activated by ATP to form Tyr-AMP and then transferred to the acceptor end of tRNA(Tyr). The chain is Tyrosine--tRNA ligase from Saccharolobus islandicus (strain M.14.25 / Kamchatka #1) (Sulfolobus islandicus).